Consider the following 227-residue polypeptide: PKHD-type hydroxylase A1S_0473 (227 aa).

A Fe2OG dioxygenase domain is found at 78–178; the sequence is KIIPPLFNRY…RFASFFWVQS (101 aa). Fe cation contacts are provided by His96, Asp98, and His159. Arg169 serves as a coordination point for 2-oxoglutarate.

The cofactor is Fe(2+). Requires L-ascorbate as cofactor.

The chain is PKHD-type hydroxylase A1S_0473 from Acinetobacter baumannii (strain ATCC 17978 / DSM 105126 / CIP 53.77 / LMG 1025 / NCDC KC755 / 5377).